The following is a 354-amino-acid chain: Protein Wnt-11 (354 aa).

The signal sequence occupies residues 1 to 24; sequence MRARPQVCEALLFALALHTGVCYG. N-linked (GlcNAc...) asparagine glycosylation is found at N40 and N90. 3 cysteine pairs are disulfide-bonded: C80-C91, C130-C138, and C140-C157. N160 carries an N-linked (GlcNAc...) asparagine glycan. 8 disulfides stabilise this stretch: C209–C223, C211–C218, C283–C314, C299–C309, C313–C353, C329–C344, C331–C341, and C336–C337. The O-palmitoleoyl serine; by PORCN moiety is linked to residue S215. Residues N300 and N304 are each glycosylated (N-linked (GlcNAc...) asparagine).

This sequence belongs to the Wnt family. In terms of processing, palmitoleoylation is required for efficient binding to frizzled receptors. Depalmitoleoylation leads to Wnt signaling pathway inhibition.

It is found in the secreted. The protein localises to the extracellular space. Its subcellular location is the extracellular matrix. In terms of biological role, ligand for members of the frizzled family of seven transmembrane receptors. Probable developmental protein. May be a signaling molecule which affects the development of discrete regions of tissues. Is likely to signal over only few cell diameters. In Mus musculus (Mouse), this protein is Protein Wnt-11 (Wnt11).